Here is a 392-residue protein sequence, read N- to C-terminus: Methylthioribose-1-phosphate isomerase (392 aa).

Asp-267 acts as the Proton donor in catalysis.

It belongs to the eIF-2B alpha/beta/delta subunits family. MtnA subfamily.

It is found in the cytoplasm. The protein resides in the nucleus. It catalyses the reaction 5-(methylsulfanyl)-alpha-D-ribose 1-phosphate = 5-(methylsulfanyl)-D-ribulose 1-phosphate. The protein operates within amino-acid biosynthesis; L-methionine biosynthesis via salvage pathway; L-methionine from S-methyl-5-thio-alpha-D-ribose 1-phosphate: step 1/6. Its function is as follows. Catalyzes the interconversion of methylthioribose-1-phosphate (MTR-1-P) into methylthioribulose-1-phosphate (MTRu-1-P). The polypeptide is Methylthioribose-1-phosphate isomerase (Blastomyces gilchristii (strain SLH14081) (Blastomyces dermatitidis)).